Here is a 190-residue protein sequence, read N- to C-terminus: uncharacterized protein (190 aa).

The N-terminal stretch at 1 to 28 is a signal peptide; that stretch reads MEFSLQYITIFIFVILFLIGLFSSKSRS.

This is an uncharacterized protein from Haemophilus influenzae (strain ATCC 51907 / DSM 11121 / KW20 / Rd).